The primary structure comprises 865 residues: Probable alpha/beta-glucosidase ARB_02101 (865 aa).

An N-terminal signal peptide occupies residues 1–21 (MFGRTLALAAVFATTVLSAAA). N-linked (GlcNAc...) asparagine glycosylation is found at Asn101 and Asn299. The active-site Nucleophile is Asp428. Residue Glu431 is part of the active site. Residue Asn515 is glycosylated (N-linked (GlcNAc...) asparagine). The active-site Proton donor is Asp548. N-linked (GlcNAc...) asparagine glycosylation is found at Asn549, Asn585, and Asn748.

It belongs to the glycosyl hydrolase 31 family.

Its subcellular location is the secreted. The catalysed reaction is Hydrolysis of terminal, non-reducing (1-&gt;4)-linked alpha-D-glucose residues with release of alpha-D-glucose.. The enzyme catalyses Hydrolysis of terminal, non-reducing beta-D-glucosyl residues with release of beta-D-glucose.. Glucosidase involved in the degradation of cellulosic biomass. Has both alpha- and beta-glucosidase activity. This Arthroderma benhamiae (strain ATCC MYA-4681 / CBS 112371) (Trichophyton mentagrophytes) protein is Probable alpha/beta-glucosidase ARB_02101.